Consider the following 142-residue polypeptide: 3-hydroxyacyl-[acyl-carrier-protein] dehydratase FabZ (142 aa).

H41 is an active-site residue.

It belongs to the thioester dehydratase family. FabZ subfamily.

The protein localises to the cytoplasm. The enzyme catalyses a (3R)-hydroxyacyl-[ACP] = a (2E)-enoyl-[ACP] + H2O. Its function is as follows. Involved in unsaturated fatty acids biosynthesis. Catalyzes the dehydration of short chain beta-hydroxyacyl-ACPs and long chain saturated and unsaturated beta-hydroxyacyl-ACPs. This Symbiobacterium thermophilum (strain DSM 24528 / JCM 14929 / IAM 14863 / T) protein is 3-hydroxyacyl-[acyl-carrier-protein] dehydratase FabZ.